A 526-amino-acid polypeptide reads, in one-letter code: MSGNKVEVDKRRTFAIISHPDAGKTTITEKVLLFGNALQKAGTVKGKKSGQHAKSDWMEMEKDRGISITTSVMQFPYGGALVNLLDTPGHEDFSEDTYRTLTAVDSCLMVIDSAKGVEERTIKLMEVTRLRDTPIVTFMNKLDRDIRDPIDLMDEVESVLNIACAPITWPIGSGKEFKGIYHILRDEVVLYQGGMGHTIQDRRVIKGINNPDLEKAIGSYAADLRDEMELVRGASHEFDHAAFLKGELTPVFFGTALGNFGVDHILDGIVEWAPKPLPRESDARVVMPEEEKFTGFVFKIQANMDPKHRDRVAFMRVCSGRYEQGMKMHHVRIGKDVNVSDALTFMAGDRERAEEAYPGDIIGLHNHGTIRIGDTFTQGEKFRFTGVPNFAPEMFRRIRLRDPLKQKQLLKGLVQLSEEGAVQVFRPIDTNDLIVGAVGVLQFEVVVGRLKSEYNVEAIYEGISVSTARWVYCKDERKLEEFRRKCSQNLALDGGDNLTYIAPTMVNLNLSMERYPDIEFAKTREH.

Residues 9–277 enclose the tr-type G domain; it reads DKRRTFAIIS…GIVEWAPKPL (269 aa). Residues 18–25, 86–90, and 140–143 each bind GTP; these read SHPDAGKT, DTPGH, and NKLD.

The protein belongs to the TRAFAC class translation factor GTPase superfamily. Classic translation factor GTPase family. PrfC subfamily.

The protein localises to the cytoplasm. In terms of biological role, increases the formation of ribosomal termination complexes and stimulates activities of RF-1 and RF-2. It binds guanine nucleotides and has strong preference for UGA stop codons. It may interact directly with the ribosome. The stimulation of RF-1 and RF-2 is significantly reduced by GTP and GDP, but not by GMP. This Shewanella baltica (strain OS223) protein is Peptide chain release factor 3.